The chain runs to 327 residues: Phenylalanine--tRNA ligase alpha subunit (327 aa).

Residue glutamate 252 participates in Mg(2+) binding.

The protein belongs to the class-II aminoacyl-tRNA synthetase family. Phe-tRNA synthetase alpha subunit type 1 subfamily. As to quaternary structure, tetramer of two alpha and two beta subunits. Mg(2+) serves as cofactor.

Its subcellular location is the cytoplasm. The enzyme catalyses tRNA(Phe) + L-phenylalanine + ATP = L-phenylalanyl-tRNA(Phe) + AMP + diphosphate + H(+). This chain is Phenylalanine--tRNA ligase alpha subunit, found in Edwardsiella ictaluri (strain 93-146).